The chain runs to 154 residues: CASP-like protein 5C2 (154 aa).

Over 1 to 17 (MEHVPGSFGTSASFALR) the chain is Cytoplasmic. A helical transmembrane segment spans residues 18–38 (FGQTIFSAASLIFMCFDFDFY). Over 39 to 41 (DFT) the chain is Extracellular. Residues 42–62 (TFCYLAMVMAIVTPWSILLAL) traverse the membrane as a helical segment. Residues 63–81 (TDTYSVLVKLLPQELRVLS) lie on the Cytoplasmic side of the membrane. A helical membrane pass occupies residues 82 to 102 (IVFAGDFVLSFLSLGGACAVA). Residues 103-128 (SATELLASADGKICDGSLCIQYQVSA) lie on the Extracellular side of the membrane. Residues 129-149 (ALAFLCWFLLLASALFNFWSL) form a helical membrane-spanning segment. Over 150–154 (PSLYY) the chain is Cytoplasmic.

The protein belongs to the Casparian strip membrane proteins (CASP) family. Homodimer and heterodimers.

It localises to the cell membrane. The sequence is that of CASP-like protein 5C2 from Arabidopsis thaliana (Mouse-ear cress).